Reading from the N-terminus, the 240-residue chain is Ribosomal RNA small subunit methyltransferase G (240 aa).

Residues Gly-78, Phe-83, 129 to 130 (AE), and Arg-147 contribute to the S-adenosyl-L-methionine site. The interval 218–240 (RRQTSKKYPRKPGTPNKSPLLEN) is disordered.

The protein belongs to the methyltransferase superfamily. RNA methyltransferase RsmG family.

Its subcellular location is the cytoplasm. Its function is as follows. Specifically methylates the N7 position of guanine in position 535 of 16S rRNA. The protein is Ribosomal RNA small subunit methyltransferase G of Staphylococcus haemolyticus (strain JCSC1435).